Consider the following 406-residue polypeptide: MTKVLVMFMDFLFENSWKAVCPYNPKLDLKDIYIYDTTLRDGEQTPGVCFTKEQKLEIARKLDELGLKQIEAGFPIVSEREADIVKTIANEGLNADILALCRALKKDIDKAIECDVDGIITFIATSPLHLKYKFNNKSLDEILEMGVEAVEYAKEHGLFVAFSAEDATRTPIEDLIKVHKAAEEAGADRVHIADTTGCATPQSMEFICKTLKENLKKAHIGVHCHNDFGFAVINSIYGLIGGAKAVSTTVNGIGERAGNAALEELIMALTVLYDVDLGLNLEVLPELCRMVEEYSGIKMPKNKPIVGELVFAHESGIHVDAVIENPLTYEPFLPEKIGLKRNILLGKHSGCRAVAYKLKLMGIDYDREMLCEIVKKVKEIREEGKFITDEVFKEIVEEVLRKRNKN.

In terms of domain architecture, Pyruvate carboxyltransferase spans 32 to 285; sequence IYIYDTTLRD…DLGLNLEVLP (254 aa).

Belongs to the alpha-IPM synthase/homocitrate synthase family.

It catalyses the reaction acetyl-CoA + 2-oxoglutarate + H2O = (2R)-homocitrate + CoA + H(+). The catalysed reaction is 2-oxoadipate + acetyl-CoA + H2O = (R)-dihomocitrate + CoA + H(+). It carries out the reaction 2-oxoheptanedioate + acetyl-CoA + H2O = (R)-trihomocitrate + CoA + H(+). It functions in the pathway organic acid metabolism; 2-oxosuberate biosynthesis. In terms of biological role, catalyzes the condensation of alpha-ketoglutarate and acetyl-CoA to form (R)-homocitrate. Can also catalyze the condensation of alpha-ketoadipate with acetyl-CoA to form (R)-homo(2)citrate, and the condensation of alpha-ketopimelate with acetyl-CoA to form (R)-homo(3)citrate. These reactions are part of the biosynthesis pathway of coenzyme B and biotin. This is Homocitrate synthase AksA (aksA) from Methanocaldococcus jannaschii (strain ATCC 43067 / DSM 2661 / JAL-1 / JCM 10045 / NBRC 100440) (Methanococcus jannaschii).